Here is a 257-residue protein sequence, read N- to C-terminus: Imidazole glycerol phosphate synthase subunit HisF (257 aa).

Catalysis depends on residues D11 and D130.

Belongs to the HisA/HisF family. Heterodimer of HisH and HisF.

It localises to the cytoplasm. It catalyses the reaction 5-[(5-phospho-1-deoxy-D-ribulos-1-ylimino)methylamino]-1-(5-phospho-beta-D-ribosyl)imidazole-4-carboxamide + L-glutamine = D-erythro-1-(imidazol-4-yl)glycerol 3-phosphate + 5-amino-1-(5-phospho-beta-D-ribosyl)imidazole-4-carboxamide + L-glutamate + H(+). It functions in the pathway amino-acid biosynthesis; L-histidine biosynthesis; L-histidine from 5-phospho-alpha-D-ribose 1-diphosphate: step 5/9. In terms of biological role, IGPS catalyzes the conversion of PRFAR and glutamine to IGP, AICAR and glutamate. The HisF subunit catalyzes the cyclization activity that produces IGP and AICAR from PRFAR using the ammonia provided by the HisH subunit. This chain is Imidazole glycerol phosphate synthase subunit HisF, found in Shewanella baltica (strain OS155 / ATCC BAA-1091).